The primary structure comprises 309 residues: tRNA hydroxylation protein P2 (309 aa).

This sequence belongs to the peptidase U32 family.

Its function is as follows. Involved in prephenate-dependent formation of 5-hydroxyuridine (ho5U) modification at position 34 in tRNAs, the first step in 5-methoxyuridine (mo5U) biosynthesis. The chain is tRNA hydroxylation protein P2 from Bacillus subtilis (strain 168).